Reading from the N-terminus, the 54-residue chain is uncharacterized protein (54 aa).

Residues 1–54 (MWTLKARKEHTGISGKPTARTDRHGSTRSGDSELQASARRFSRLPDRCGAQGVT) form a disordered region.

This is an uncharacterized protein from Mycobacterium tuberculosis (strain ATCC 25618 / H37Rv).